A 278-amino-acid polypeptide reads, in one-letter code: Polyamine aminopropyltransferase (278 aa).

A PABS domain is found at glutamate 5–lysine 238. Glutamine 34 serves as a coordination point for S-methyl-5'-thioadenosine. Spermidine-binding residues include histidine 65 and aspartate 89. S-methyl-5'-thioadenosine-binding positions include glutamate 109 and aspartate 140 to glycine 141. Aspartate 158 functions as the Proton acceptor in the catalytic mechanism. Residue aspartate 158–aspartate 161 coordinates spermidine. Proline 165 contributes to the S-methyl-5'-thioadenosine binding site.

The protein belongs to the spermidine/spermine synthase family. In terms of assembly, homodimer or homotetramer.

It is found in the cytoplasm. The catalysed reaction is S-adenosyl 3-(methylsulfanyl)propylamine + putrescine = S-methyl-5'-thioadenosine + spermidine + H(+). The protein operates within amine and polyamine biosynthesis; spermidine biosynthesis; spermidine from putrescine: step 1/1. Functionally, catalyzes the irreversible transfer of a propylamine group from the amino donor S-adenosylmethioninamine (decarboxy-AdoMet) to putrescine (1,4-diaminobutane) to yield spermidine. This Caldicellulosiruptor bescii (strain ATCC BAA-1888 / DSM 6725 / KCTC 15123 / Z-1320) (Anaerocellum thermophilum) protein is Polyamine aminopropyltransferase.